Consider the following 592-residue polypeptide: Testis-specific serine kinase substrate (592 aa).

A Phosphoserine modification is found at Ser217. The segment at 232–308 is disordered; that stretch reads QDETPRRQEA…VPAGWGMGPR (77 aa). Positions 234–264 are enriched in basic and acidic residues; sequence ETPRRQEAELQEPEEKQEPEEKQEPEEKQKP. A compositionally biased stretch (polar residues) spans 269 to 281; the sequence is SWNSLGPAATSQG. A Phosphoserine; by TSSK1 and TSSK2 modification is found at Ser288. At Ser316 the chain carries Phosphoserine. The disordered stretch occupies residues 566–592; it reads LEGSTGTMGGGSSAGTPPKQGGSAPEQ.

In terms of processing, phosphorylated on serine residue(s) by STK22A/TSSK1 and STK22B/TSSK2. Highly expressed in testis. Expressed at low levels in prostate, female breast, placenta, ovary and thymus.

It localises to the cytoplasm. The protein resides in the cytoskeleton. Its subcellular location is the microtubule organizing center. The protein localises to the centrosome. It is found in the centriole. Functionally, may play a role in testicular physiology, most probably in the process of spermatogenesis or spermatid development. The chain is Testis-specific serine kinase substrate (TSKS) from Homo sapiens (Human).